Here is a 265-residue protein sequence, read N- to C-terminus: Diphthine synthase (265 aa).

Residues Leu9, Asp85, Ile88, 113–114, Leu168, Ala211, and His236 each bind S-adenosyl-L-methionine; that span reads TA.

This sequence belongs to the diphthine synthase family. In terms of assembly, homodimer.

It catalyses the reaction 2-[(3S)-amino-3-carboxypropyl]-L-histidyl-[translation elongation factor 2] + 3 S-adenosyl-L-methionine = diphthine-[translation elongation factor 2] + 3 S-adenosyl-L-homocysteine + 3 H(+). It participates in protein modification; peptidyl-diphthamide biosynthesis. Functionally, S-adenosyl-L-methionine-dependent methyltransferase that catalyzes the trimethylation of the amino group of the modified target histidine residue in translation elongation factor 2 (EF-2), to form an intermediate called diphthine. The three successive methylation reactions represent the second step of diphthamide biosynthesis. In Halorubrum lacusprofundi (strain ATCC 49239 / DSM 5036 / JCM 8891 / ACAM 34), this protein is Diphthine synthase.